The primary structure comprises 108 residues: Cyclin-dependent protein kinase inhibitor SMR13 (108 aa).

Functionally, probable cyclin-dependent protein kinase (CDK) inhibitor that functions as a repressor of mitosis in the endoreduplication cell cycle. This Arabidopsis thaliana (Mouse-ear cress) protein is Cyclin-dependent protein kinase inhibitor SMR13.